A 477-amino-acid chain; its full sequence is Glycogen synthase (477 aa).

Lysine 15 provides a ligand contact to ADP-alpha-D-glucose.

The protein belongs to the glycosyltransferase 1 family. Bacterial/plant glycogen synthase subfamily.

It catalyses the reaction [(1-&gt;4)-alpha-D-glucosyl](n) + ADP-alpha-D-glucose = [(1-&gt;4)-alpha-D-glucosyl](n+1) + ADP + H(+). Its pathway is glycan biosynthesis; glycogen biosynthesis. In terms of biological role, synthesizes alpha-1,4-glucan chains using ADP-glucose. This is Glycogen synthase from Streptococcus pneumoniae (strain 70585).